Consider the following 262-residue polypeptide: Pyridoxine 5'-phosphate synthase (262 aa).

A 3-amino-2-oxopropyl phosphate-binding site is contributed by N6. 8–9 (DH) contributes to the 1-deoxy-D-xylulose 5-phosphate binding site. R17 contacts 3-amino-2-oxopropyl phosphate. The Proton acceptor role is filled by H43. Residues R45 and H50 each contribute to the 1-deoxy-D-xylulose 5-phosphate site. The active-site Proton acceptor is E70. Residue T102 coordinates 1-deoxy-D-xylulose 5-phosphate. H215 functions as the Proton donor in the catalytic mechanism. 3-amino-2-oxopropyl phosphate contacts are provided by residues G216 and 237 to 238 (GH).

This sequence belongs to the PNP synthase family. As to quaternary structure, homooctamer; tetramer of dimers.

Its subcellular location is the cytoplasm. The enzyme catalyses 3-amino-2-oxopropyl phosphate + 1-deoxy-D-xylulose 5-phosphate = pyridoxine 5'-phosphate + phosphate + 2 H2O + H(+). The protein operates within cofactor biosynthesis; pyridoxine 5'-phosphate biosynthesis; pyridoxine 5'-phosphate from D-erythrose 4-phosphate: step 5/5. Functionally, catalyzes the complicated ring closure reaction between the two acyclic compounds 1-deoxy-D-xylulose-5-phosphate (DXP) and 3-amino-2-oxopropyl phosphate (1-amino-acetone-3-phosphate or AAP) to form pyridoxine 5'-phosphate (PNP) and inorganic phosphate. The polypeptide is Pyridoxine 5'-phosphate synthase (Helicobacter pylori (strain G27)).